The primary structure comprises 255 residues: Octanoyltransferase (255 aa).

Residues 54–238 (GDANELVWLL…SFTTIFGATV (185 aa)) enclose the BPL/LPL catalytic domain. Substrate is bound by residues 92–99 (RGGQLTYH), 167–169 (AIG), and 180–182 (GIA). The Acyl-thioester intermediate role is filled by Cys198.

This sequence belongs to the LipB family.

It localises to the cytoplasm. It carries out the reaction octanoyl-[ACP] + L-lysyl-[protein] = N(6)-octanoyl-L-lysyl-[protein] + holo-[ACP] + H(+). It functions in the pathway protein modification; protein lipoylation via endogenous pathway; protein N(6)-(lipoyl)lysine from octanoyl-[acyl-carrier-protein]: step 1/2. Its function is as follows. Catalyzes the transfer of endogenously produced octanoic acid from octanoyl-acyl-carrier-protein onto the lipoyl domains of lipoate-dependent enzymes. Lipoyl-ACP can also act as a substrate although octanoyl-ACP is likely to be the physiological substrate. In Rhodopseudomonas palustris (strain BisB5), this protein is Octanoyltransferase.